An 815-amino-acid polypeptide reads, in one-letter code: Protein SEY1 homolog (815 aa).

Residues M1–N737 are Cytoplasmic-facing. The region spanning T28–P260 is the GB1/RHD3-type G domain. G38 to S45 is a GTP binding site. A coiled-coil region spans residues A298 to E321. Residues I738–L758 traverse the membrane as a helical segment. The Lumenal segment spans residues T759–P761. The chain crosses the membrane as a helical span at residues V762 to F782. Residues S783–K815 lie on the Cytoplasmic side of the membrane.

This sequence belongs to the TRAFAC class dynamin-like GTPase superfamily. GB1/RHD3 GTPase family. RHD3 subfamily.

It is found in the endoplasmic reticulum membrane. Its function is as follows. Probable GTP-binding protein that may be involved in cell development. The sequence is that of Protein SEY1 homolog from Cryptosporidium hominis.